Here is a 386-residue protein sequence, read N- to C-terminus: MTAQLNKVRRAIIDGCNPAMISDLLDDLREKNVLVDSEVEHIKESNNTNRDRCRAMIDSVKKKGDDPSNILLESLVKNHKTLAKSLGLHEPPMAPVPIQEHNADTIKNKDIKGVIPCSAEEFKKIQDTQGDKIYDVRKREGRKGLALIICNEKFENLNERHGAKVDLDGMTKLLNELGYQVHPHTNLTKTEMVKVMKEFAAQEEHADSDSTFIVLMSHGDRQGVCGTDSKKTEKEKGQYEVTNLLEIDEIFSTFNNVNCSKLRNKPKVIIIQACRGENKGGLLVRDDVASPPLEDDGLHFVQREADFICFCSSTPDTVSWRDPTKGSVFITHLIEKMNEYAHCQPLGDIFLEVQSLFKDKCPNSRSQMPTQERCTLTKKFYLFPGY.

A propeptide spanning residues 1–100 (MTAQLNKVRR…PPMAPVPIQE (100 aa)) is cleaved from the precursor. In terms of domain architecture, CARD spans 22 to 88 (SDLLDDLREK…HKTLAKSLGL (67 aa)). Catalysis depends on residues His-218 and Cys-274. Positions 287 to 296 (DVASPPLEDD) are excised as a propeptide.

This sequence belongs to the peptidase C14A family. As to quaternary structure, heterotetramer that consists of two anti-parallel arranged heterodimers, each one formed by a 20 kDa (Caspase-1 subunit p20) and a 10 kDa (Caspase-1 subunit p10) subunit. Heterotetramer that consists of two anti-parallel arranged heterodimers, each one formed by a 20 kDa (Caspase-1 subunit p20) and a 10 kDa (Caspase-1 subunit p10) subunit. Can form a heterodimer with isoform epsilon which then has an inhibitory effect. In terms of processing, the two subunits are derived from the precursor sequence by an autocatalytic mechanism.

The protein resides in the cytoplasm. The protein localises to the cell membrane. The catalysed reaction is Strict requirement for an Asp residue at position P1 and has a preferred cleavage sequence of Tyr-Val-Ala-Asp-|-.. Its function is as follows. Thiol protease involved in a variety of inflammatory processes by proteolytically cleaving other proteins, such as the precursors of the inflammatory cytokines interleukin-1 beta (IL1B) and interleukin 18 (IL18) as well as the pyroptosis inducer Gasdermin-D (GSDMD), into active mature peptides. Plays a key role in cell immunity as an inflammatory response initiator: once activated through formation of an inflammasome complex, it initiates a pro-inflammatory response through the cleavage of the two inflammatory cytokines IL1B and IL18, releasing the mature cytokines which are involved in a variety of inflammatory processes. Cleaves a tetrapeptide after an Asp residue at position P1. Also initiates pyroptosis, a programmed lytic cell death pathway, through cleavage of GSDMD. In Xenopus laevis (African clawed frog), this protein is Caspase-1-A (casp1-a).